The following is a 147-amino-acid chain: Ponticulin-like protein C4 (147 aa).

The first 20 residues, 1–20 (MKFTKSLLLLIVAVFASSNA), serve as a signal peptide directing secretion. A lipid anchor (GPI-like-anchor amidated asparagine) is attached at Asn-118. Residue Asn-118 is glycosylated (N-linked (GlcNAc...) asparagine). A propeptide spans 119–147 (SSESDSSDSTRIGASFALAAAALLSMIAL) (removed in mature form).

It belongs to the ponticulin family. The GPI-like-anchor contains a phosphoceramide group, rather than a phosphatidyl group.

The protein localises to the cell membrane. The sequence is that of Ponticulin-like protein C4 (ponC4) from Dictyostelium discoideum (Social amoeba).